Here is a 320-residue protein sequence, read N- to C-terminus: Ferrochelatase (320 aa).

Positions 194 and 275 each coordinate Fe cation.

This sequence belongs to the ferrochelatase family. In terms of assembly, monomer.

Its subcellular location is the cytoplasm. The enzyme catalyses heme b + 2 H(+) = protoporphyrin IX + Fe(2+). It functions in the pathway porphyrin-containing compound metabolism; protoheme biosynthesis; protoheme from protoporphyrin-IX: step 1/1. In terms of biological role, catalyzes the ferrous insertion into protoporphyrin IX. The chain is Ferrochelatase from Salmonella agona (strain SL483).